Here is a 773-residue protein sequence, read N- to C-terminus: Polymeric immunoglobulin receptor (773 aa).

The signal sequence occupies residues 1–18 (MALFLLTCLLAVFSAATA). At 19-647 (QSSLLGPSSI…SASGQSGSAK (629 aa)) the chain is on the extracellular side. An Ig-like V-type 1; required for binding to polymeric IgA and IgM domain is found at 25 to 131 (PSSIFGPGEV…RGLDFGVNVL (107 aa)). Cystine bridges form between C46/C115, C155/C225, C260/C324, C369/C438, and C478/C538. A glycan (N-linked (GlcNAc...) asparagine; in variant N-88) is linked at K88. N108 is a glycosylation site (N-linked (GlcNAc...) asparagine). 4 consecutive Ig-like V-type domains span residues 138 to 232 (PDDV…SDPT), 233 to 340 (AEEQ…TQLR), 352 to 455 (RSPP…LQIV), and 461 to 557 (PTID…VELT). The N-linked (GlcNAc...) asparagine glycan is linked to N418. The disordered stretch occupies residues 619–641 (AVQSAEDPASGSRASVDASSASG). Over residues 632-641 (ASVDASSASG) the composition is skewed to low complexity. The helical transmembrane segment at 648 to 670 (VLISTLVPLGLVLAAGAMAVAIA) threads the bilayer. The Cytoplasmic portion of the chain corresponds to 671–773 (RARHRRNVDR…AEHQDGPKEA (103 aa)). A phosphoserine mark is found at S682, S691, S698, and S744. The interval 725–746 (ATATESTVEIEEPKKAKRSSKE) is disordered. Over residues 735–746 (EEPKKAKRSSKE) the composition is skewed to basic and acidic residues.

In terms of assembly, interacts (mainly via CDR1-like domain) with dimeric IgA. Interacts (mainly via CDR2-like domain) with pentameric IgM. Either free or part of the secretory IgA (sIgA) complex that consists of two, four or five IgA monomers, and two additional non-Ig polypeptides, namely the JCHAIN and the secretory component (the proteolytic product of PIGR). Free secretory component interacts with bacterial antigens toxA of C.difficile and eae of E.coli. N-glycosylated. N-glycosylation is required for anchoring IgA molecules to mucus, but is not necessary for Ig binding.

The protein resides in the cell membrane. It localises to the secreted. Its function is as follows. Mediates selective transcytosis of polymeric IgA and IgM across mucosal epithelial cells. Binds polymeric IgA and IgM at the basolateral surface of epithelial cells. The complex is then transported across the cell to be secreted at the apical surface. During this process, a cleavage occurs that separates the extracellular (known as the secretory component) from the transmembrane segment. Through its N-linked glycans ensures anchoring of secretory IgA (sIgA) molecules to mucus lining the epithelial surface to neutralize extracellular pathogens. On its own (free form) may act as a non-specific microbial scavenger to prevent pathogen interaction with epithelial cells. In Oryctolagus cuniculus (Rabbit), this protein is Polymeric immunoglobulin receptor (PIGR).